We begin with the raw amino-acid sequence, 362 residues long: Microfibril-associated glycoprotein 3 (362 aa).

The first 18 residues, 1 to 18, serve as a signal peptide directing secretion; that stretch reads MKLHCCLFTLVASIIVPA. At 19–147 the chain is on the extracellular side; it reads AFVLEDVDFD…LRVIFTSGDM (129 aa). N-linked (GlcNAc...) asparagine glycans are attached at residues Asn-36, Asn-41, and Asn-110. The region spanning 45–137 is the Ig-like C2-type domain; sequence PSSFELSASS…SPIRASYSVT (93 aa). A disulfide bond links Cys-73 and Cys-124. The chain crosses the membrane as a helical span at residues 148–170; it reads SVYYMIVCLIAFTITLILNVTRL. The Cytoplasmic segment spans residues 171-362; it reads CMMSSHLRKT…KDGAYENCQL (192 aa). 2 disordered regions span residues 285–306 and 323–350; these read VINPEMGRSNSPGGDSDDGSLN and ETKSIDTESQGSSHFSPPDDIGSAESNC. Residues 323-337 are compositionally biased toward polar residues; that stretch reads ETKSIDTESQGSSHF.

Post-translationally, glycosylated.

Its subcellular location is the cell membrane. Functionally, component of the elastin-associated microfibrils. The polypeptide is Microfibril-associated glycoprotein 3 (MFAP3) (Homo sapiens (Human)).